Here is a 143-residue protein sequence, read N- to C-terminus: NADH-quinone oxidoreductase subunit A (143 aa).

The next 3 membrane-spanning stretches (helical) occupy residues 12–32 (YIVG…FLGG), 61–81 (FYLI…LYIW), and 90–110 (WIGF…LIYA).

This sequence belongs to the complex I subunit 3 family. In terms of assembly, NDH-1 is composed of 13 different subunits. Subunits NuoA, H, J, K, L, M, N constitute the membrane sector of the complex.

It localises to the cell inner membrane. It catalyses the reaction a quinone + NADH + 5 H(+)(in) = a quinol + NAD(+) + 4 H(+)(out). Its function is as follows. NDH-1 shuttles electrons from NADH, via FMN and iron-sulfur (Fe-S) centers, to quinones in the respiratory chain. The immediate electron acceptor for the enzyme in this species is believed to be ubiquinone. Couples the redox reaction to proton translocation (for every two electrons transferred, four hydrogen ions are translocated across the cytoplasmic membrane), and thus conserves the redox energy in a proton gradient. The polypeptide is NADH-quinone oxidoreductase subunit A (Blochmanniella floridana).